The following is a 384-amino-acid chain: Methyl-CpG-binding domain-containing protein 10 (384 aa).

The 71-residue stretch at 4 to 74 folds into the MBD domain; it reads TDELVSIELP…SEFEWTTGET (71 aa). The disordered stretch occupies residues 65 to 384; sequence SEFEWTTGET…QQGAAASVSC (320 aa). The segment covering 80–91 has biased composition (polar residues); the sequence is RISQKVKATTPT. A coiled-coil region spans residues 100–224; that stretch reads KRRSSLTKKD…MEVDTSELEK (125 aa). Basic and acidic residues-rich tracts occupy residues 106-227, 234-250, and 257-269; these read TKKD…KKAG, EPSK…KEAQ, and DVEK…KTEN. Residues 270 to 284 are compositionally biased toward polar residues; the sequence is KGSVTTEANGEQNVT. A compositionally biased stretch (basic and acidic residues) spans 295 to 365; that stretch reads EADKGKESKE…NDMKAEDTNR (71 aa). Positions 310 to 356 form a coiled coil; sequence TEAEANKENDTQESDEKKTEAAANKENETQESDVKKTEAAVAEEKSN. Residue S323 is modified to Phosphoserine. A compositionally biased stretch (low complexity) spans 369 to 384; the sequence is ANQVQQQQGAAASVSC.

As to expression, expressed in leaves, buds, flowers, stems and siliques.

The protein localises to the nucleus. Its function is as follows. Probable transcriptional regulator. Required for nucleolar dominance that consist in the silencing of rRNA genes inherited from one progenitor in genetic hybrids. This is Methyl-CpG-binding domain-containing protein 10 (MBD10) from Arabidopsis thaliana (Mouse-ear cress).